Here is a 289-residue protein sequence, read N- to C-terminus: Phytoene synthase (289 aa).

Belongs to the phytoene/squalene synthase family. The cofactor is ATP. It depends on Mn(2+) as a cofactor. Requires Mg(2+) as cofactor.

It functions in the pathway carotenoid biosynthesis; phytoene biosynthesis. Functionally, involved in the biosynthesis of carotenoids. Catalyzes the condensation of two molecules of geranylgeranyl diphosphate (GGPP) to give prephytoene diphosphate (PPPP) and the subsequent rearrangement of the cyclopropylcarbinyl intermediate to yield phytoene. In Thermus thermophilus (strain ATCC BAA-163 / DSM 7039 / HB27), this protein is Phytoene synthase (crtB).